A 757-amino-acid polypeptide reads, in one-letter code: Mitofusin-2 (757 aa).

Topologically, residues 1-604 (MSLLFSRCNS…TQEELMVSMV (604 aa)) are cytoplasmic. Residues 30–94 (KHFVTAKKKI…VRGISEVLAR (65 aa)) are part of a helix bundle domain, formed by helices from N-terminal and C-terminal regions. Positions 93 to 342 (ARRHMKVAFF…VRMFEFQNFE (250 aa)) constitute a Dynamin-type G domain. Positions 103–110 (GRTSNGKS) are G1 motif. 106–111 (SNGKST) is a binding site for GTP. Position 111 is a phosphothreonine; by PINK1 (T111). The G2 motif stretch occupies residues 129 to 130 (TT). Residues 199–202 (DSPG) are G3 motif. 258 to 261 (NRWD) contributes to the GTP binding site. A G4 motif region spans residues 258–261 (NRWD). Residue E288 is a region of interest, G5 motif. S305 and K307 together coordinate GTP. The interval 359–385 (EQHTVRAKQIAEAVRLIMDSLHIAAQE) is part of a helix bundle domain, formed by helices from N-terminal and C-terminal regions. Positions 406 to 434 (KQLELLAQDYKLRIKQITEEVERQVSTAM) form a coiled coil. S442 carries the post-translational modification Phosphoserine. Residues 605 to 625 (TGLASLTSRTSMGILVVGGVV) traverse the membrane as a helical segment. W626 is a topological domain (mitochondrial intermembrane). The chain crosses the membrane as a helical span at residues 627 to 647 (KAVGWRLIALSFGLYGLLYVY). Over 648–757 (ERLTWTTKAK…FTHQYLQPSR (110 aa)) the chain is Cytoplasmic. A coiled-coil region spans residues 696 to 738 (FAHLCQQVDITRDNLEQEIAAMNKKVEALDSLQSRAKLLRNKA). The tract at residues 722 to 753 (EALDSLQSRAKLLRNKAGWLDSELNMFTHQYL) is part of a helix bundle domain, formed by helices from N-terminal and C-terminal regions.

It belongs to the TRAFAC class dynamin-like GTPase superfamily. Dynamin/Fzo/YdjA family. Mitofusin subfamily. As to quaternary structure, forms homomultimers and heteromultimers with MFN1. Oligomerization is essential for mitochondrion fusion. Interacts with VAT1. Interacts with STOML2; may form heterooligomers. Interacts (phosphorylated) with PRKN. Interacts with EIF2AK3. Interacts with THG1L; THG1L probably functions as a guanyl-nucleotide exchange factor/GEF, activating MFN2. In terms of processing, phosphorylated by PINK1. Post-translationally, ubiquitinated by non-degradative ubiquitin by PRKN, promoting mitochondrial fusion; deubiquitination by USP30 inhibits mitochondrial fusion. Ubiquitinated by HUWE1 when dietary stearate (C18:0) levels are low; ubiquitination inhibits mitochondrial fusion. Ubiquitous. Expression is markedly reduced in ApoE-knockout mouse atherosclerotic arteries.

It localises to the mitochondrion outer membrane. The catalysed reaction is GTP + H2O = GDP + phosphate + H(+). Its function is as follows. Mitochondrial outer membrane GTPase that mediates mitochondrial clustering and fusion. Mitochondria are highly dynamic organelles, and their morphology is determined by the equilibrium between mitochondrial fusion and fission events. Overexpression induces the formation of mitochondrial networks. Membrane clustering requires GTPase activity and may involve a major rearrangement of the coiled coil domains. Plays a central role in mitochondrial metabolism and may be associated with obesity and/or apoptosis processes. Plays an important role in the regulation of vascular smooth muscle cell proliferation. Involved in the clearance of damaged mitochondria via selective autophagy (mitophagy). Is required for PRKN recruitment to dysfunctional mitochondria. Involved in the control of unfolded protein response (UPR) upon ER stress including activation of apoptosis and autophagy during ER stress. Acts as an upstream regulator of EIF2AK3 and suppresses EIF2AK3 activation under basal conditions. The chain is Mitofusin-2 (Mfn2) from Mus musculus (Mouse).